We begin with the raw amino-acid sequence, 816 residues long: Pentatricopeptide repeat-containing protein At5g12100, mitochondrial (816 aa).

The transit peptide at 1-39 (MVTRLRLVSRSSRYATVKFTDSVSACSCRRLFSASTDPE) directs the protein to the mitochondrion. The disordered stretch occupies residues 34–57 (ASTDPEPESQPEQAPPTNPVTGDE). 20 PPR repeats span residues 108–142 (HDFSYLLLSVLLNESKMISEAADLFFALRNEGIYP), 143–177 (SSDSLTLLLDHLVKTKQFRVTINVFLNILESDFRP), 178–212 (SKFMYGKAIQAAVKLSDVGKGLELFNRMKHDRIYP), 213–247 (SVFIYNVLIDGLCKGKRMNDAEQLFDEMLARRLLP), 248–282 (SLITYNTLIDGYCKAGNPEKSFKVRERMKADHIEP), 283–317 (SLITFNTLLKGLFKAGMVEDAENVLKEMKDLGFVP), 318–352 (DAFTFSILFDGYSSNEKAEAALGVYETAVDSGVKM), 353–387 (NAYTCSILLNALCKEGKIEKAEEILGREMAKGLVP), 388–422 (NEVIYNTMIDGYCRKGDLVGARMKIEAMEKQGMKP), 423–457 (DHLAYNCLIRRFCELGEMENAEKEVNKMKLKGVSP), 458–492 (SVETYNILIGGYGRKYEFDKCFDILKEMEDNGTMP), 493–527 (NVVSYGTLINCLCKGSKLLEAQIVKRDMEDRGVSP), 528–562 (KVRIYNMLIDGCCSKGKIEDAFRFSKEMLKKGIEL), 563–597 (NLVTYNTLIDGLSMTGKLSEAEDLLLEISRKGLKP), 598–632 (DVFTYNSLISGYGFAGNVQRCIALYEEMKRSGIKP), 633–662 (TLKTYHLLISLCTKEGIELTERLFGEMSLK), 664–698 (DLLVYNGVLHCYAVHGDMEKAFNLQKQMIEKSIGL), 699–733 (DKTTYNSLILGQLKVGKLCEVRSLIDEMNAREMEP), 734–768 (EADTYNIIVKGHCEVKDYMSAYVWYREMQEKGFLL), and 769–803 (DVCIGNELVSGLKEEWRSKEAEIVISEMNGRMLGD).

The protein belongs to the PPR family. P subfamily.

The protein localises to the mitochondrion. In Arabidopsis thaliana (Mouse-ear cress), this protein is Pentatricopeptide repeat-containing protein At5g12100, mitochondrial.